A 273-amino-acid chain; its full sequence is Phosphate import ATP-binding protein PstB (273 aa).

Positions 1-20 (MTTVSTAAASGPAVPPPRID) are disordered. One can recognise an ABC transporter domain in the interval 27-268 (VAARNLNFYY…PSDRRTQDYI (242 aa)). An ATP-binding site is contributed by 59-66 (GPSGCGKS).

This sequence belongs to the ABC transporter superfamily. Phosphate importer (TC 3.A.1.7) family. In terms of assembly, the complex is composed of two ATP-binding proteins (PstB), two transmembrane proteins (PstC and PstA) and a solute-binding protein (PstS).

The protein resides in the cell inner membrane. The catalysed reaction is phosphate(out) + ATP + H2O = ADP + 2 phosphate(in) + H(+). Functionally, part of the ABC transporter complex PstSACB involved in phosphate import. Responsible for energy coupling to the transport system. This Nitrobacter winogradskyi (strain ATCC 25391 / DSM 10237 / CIP 104748 / NCIMB 11846 / Nb-255) protein is Phosphate import ATP-binding protein PstB.